The chain runs to 357 residues: Probable butyrate kinase 1 (357 aa).

Belongs to the acetokinase family.

Its subcellular location is the cytoplasm. It carries out the reaction butanoate + ATP = butanoyl phosphate + ADP. The sequence is that of Probable butyrate kinase 1 from Caldanaerobacter subterraneus subsp. tengcongensis (strain DSM 15242 / JCM 11007 / NBRC 100824 / MB4) (Thermoanaerobacter tengcongensis).